A 300-amino-acid polypeptide reads, in one-letter code: Dihydroorotate dehydrogenase B (NAD(+)), catalytic subunit (300 aa).

FMN contacts are provided by residues Ser-20 and 44-45 (KG). Residues Lys-44 and 68-72 (NSVGL) contribute to the substrate site. Residues Asn-98 and Asn-124 each coordinate FMN. Residue Asn-124 coordinates substrate. The active-site Nucleophile is Cys-127. Residues Lys-162 and Ile-188 each contribute to the FMN site. Substrate is bound at residue 189 to 190 (NT). FMN contacts are provided by residues Gly-214, 240 to 241 (GG), and 262 to 263 (GT).

Belongs to the dihydroorotate dehydrogenase family. Type 1 subfamily. In terms of assembly, heterotetramer of 2 PyrK and 2 PyrD type B subunits. Requires FMN as cofactor.

It localises to the cytoplasm. It catalyses the reaction (S)-dihydroorotate + NAD(+) = orotate + NADH + H(+). It functions in the pathway pyrimidine metabolism; UMP biosynthesis via de novo pathway; orotate from (S)-dihydroorotate (NAD(+) route): step 1/1. In terms of biological role, catalyzes the conversion of dihydroorotate to orotate with NAD(+) as electron acceptor. This chain is Dihydroorotate dehydrogenase B (NAD(+)), catalytic subunit (pyrD), found in Caldicellulosiruptor saccharolyticus (strain ATCC 43494 / DSM 8903 / Tp8T 6331).